Reading from the N-terminus, the 192-residue chain is Putative acetyltransferase SH0499 (192 aa).

Belongs to the transferase hexapeptide repeat family.

The sequence is that of Putative acetyltransferase SH0499 from Staphylococcus haemolyticus (strain JCSC1435).